Consider the following 213-residue polypeptide: Octanoyltransferase (213 aa).

Positions 32-207 constitute a BPL/LPL catalytic domain; that stretch reads DSTLDEIWLV…NILALLNNPD (176 aa). Residues 71 to 78, 138 to 140, and 151 to 153 each bind substrate; these read RGGQVTYH, SLG, and GLA. Catalysis depends on Cys-169, which acts as the Acyl-thioester intermediate.

The protein belongs to the LipB family.

It is found in the cytoplasm. It catalyses the reaction octanoyl-[ACP] + L-lysyl-[protein] = N(6)-octanoyl-L-lysyl-[protein] + holo-[ACP] + H(+). The protein operates within protein modification; protein lipoylation via endogenous pathway; protein N(6)-(lipoyl)lysine from octanoyl-[acyl-carrier-protein]: step 1/2. Functionally, catalyzes the transfer of endogenously produced octanoic acid from octanoyl-acyl-carrier-protein onto the lipoyl domains of lipoate-dependent enzymes. Lipoyl-ACP can also act as a substrate although octanoyl-ACP is likely to be the physiological substrate. The polypeptide is Octanoyltransferase (Escherichia coli O8 (strain IAI1)).